We begin with the raw amino-acid sequence, 78 residues long: Large ribosomal subunit protein bL28 (78 aa).

Residues 1–20 (MSQVCQVTGKRPVVGNNRSH) form a disordered region.

It belongs to the bacterial ribosomal protein bL28 family.

The sequence is that of Large ribosomal subunit protein bL28 from Idiomarina loihiensis (strain ATCC BAA-735 / DSM 15497 / L2-TR).